The following is a 444-amino-acid chain: Cytokine receptor-like factor 3 (444 aa).

A coiled-coil region spans residues 1 to 65 (MSIEAEALLQ…QELQTAVSRL (65 aa)). In terms of domain architecture, Fibronectin type-III spans 177–270 (PPVQIEELVE…PQTGYTTLAP (94 aa)).

It belongs to the cytokine receptor-like factor 3 family.

The protein resides in the cytoplasm. In terms of biological role, may play a role in the negative regulation of cell cycle progression. This is Cytokine receptor-like factor 3 (crlf3) from Danio rerio (Zebrafish).